A 513-amino-acid chain; its full sequence is rRNA N(6)-adenosine-methyltransferase ZCCHC4 (513 aa).

The Zn(2+) site is built by Cys-40, His-42, Cys-64, Cys-73, Cys-125, Cys-128, His-140, and His-143. The GRF-type zinc-finger motif lies at 40-82 (CPHGPTLLFVKVTQGKEETRRFYACSACRDRKDCNFFQWEDEK). Residues 172 to 175 (QYLF), Arg-202, Asp-225, 243 to 244 (NM), and Asp-276 each bind S-adenosyl-L-methionine. Residues 337-357 (QVDYDNHALYKHGKTGRKQSP) are regulatory loop. Residues Cys-380, Cys-383, His-393, Cys-394, Cys-397, Cys-400, His-410, Cys-411, Cys-414, Cys-417, His-424, Cys-425, Cys-428, Cys-431, His-436, and Cys-438 each coordinate Zn(2+). Positions 395-447 (ELCNSCTSKDGRKWNHCFLCKKCVKPSWIHCSICNHCAVPDHSCEGPKHGCFI) constitute a DHHC domain. A CCHC-type zinc finger spans residues 443–460 (HGCFICGELDHKRSTCPN). Residues 466–481 (RANKAVRKQKQRKSNK) show a composition bias toward basic residues. A disordered region spans residues 466-513 (RANKAVRKQKQRKSNKMKMETTKGQSMNHTSATRRKKRRERAHQYLGS). The span at 487–496 (TKGQSMNHTS) shows a compositional bias: polar residues. Residues 497 to 506 (ATRRKKRRER) show a composition bias toward basic residues.

This sequence belongs to the ZCCHC4 family. Interacts with components of the ASC-1 complex TRIP4, ASCC1, ASCC2 and ASCC3. Interact with AHCYL1 and AHCYL2. Interact with YTHDC2.

The protein localises to the nucleus. The protein resides in the nucleolus. Its subcellular location is the cytoplasm. The catalysed reaction is adenosine(4220) in 28S rRNA + S-adenosyl-L-methionine = N(6)-methyladenosine(4220) in 28S rRNA + S-adenosyl-L-homocysteine + H(+). RRNA N6-methyltransferase that specifically methylates the adenine in position 4220 of 28S rRNA. N6-methylation of adenine(4220) in 28S rRNA is required for translation. This Homo sapiens (Human) protein is rRNA N(6)-adenosine-methyltransferase ZCCHC4.